Here is a 177-residue protein sequence, read N- to C-terminus: MRFYNRYNSSLKNYLLCSINSFNTNTLKIPLKPTLSAVFNTFRGERSLKFIKLYLMILYISNQKPFIKKVKFSYIKKKILKRFFISVSLNKKNSFNFFMYMLNFYNYFFHIYYQKCLKYNRFENSLILYIDNIQFFFKNYNKQNQKTQIKCQLNLRNSQASILFKYLNNMFLIKVKN.

It belongs to the universal ribosomal protein uL5 family.

Its subcellular location is the mitochondrion. The chain is Large ribosomal subunit protein uL5m (RPL5) from Acanthamoeba castellanii (Amoeba).